Here is a 383-residue protein sequence, read N- to C-terminus: MAIINKDKATELILKQGFSGSYQSEQVTFLLKRTHIEPTDTAEKERLIQSGEKHYSQMISLENAPTARHLELFEQAMQQGQQRLAQEVQQLAQTLVVEFNEPIVLVSFVRAGVPLGVLLYHAIQDLGRDCVHYGISIIRDRGIDFAALETIIARHGHASIVFVDGWTGKGAIRQELQRSLGNDTRFIGKPLPLVVLSDIAGCAWLAASGDDWLIPSGILGSTISGLISRSICEGETLSADEITAENIDQWHRCIEYHHLKEFDISQQFIQRINQIRLKLNPQSNAVWAETQQQAQQDQSQQVVHKLAQEYDIQNINRIKPSIAEATRAILRRVPDLVLLRDADDEDTRLLRHLTQITKTPVQVVGDQIAPYRAITLIQKLGKG.

This sequence belongs to the cysteine protease StiP family. Is probably processed via an autocatalytic removal of a proregion of about 100 amino acids.

Its activity is regulated as follows. Is inhibited by bromopyruvate in vitro. Activity is not affected by the presence of tellurite. In terms of biological role, cysteine protease that may play a role in regulating cell morphology in response to stressful conditions which likely cause oxidative damage. Appears to catalyze its own cleavage, which probably leads to its activation. This chain is Cysteine protease StiP (stiP), found in Acinetobacter baylyi (strain ATCC 33305 / BD413 / ADP1).